The primary structure comprises 907 residues: Androgen receptor (907 aa).

Positions 1–545 (MEVQLGLGRV…PIDYYFPPQK (545 aa)) are modulating. Positions 1–574 (MEVQLGLGRV…GSCKVFFKRA (574 aa)) are interaction with ZNF318. Disordered stretches follow at residues 36 to 152 (NPGP…LSLL) and 200 to 231 (QQQE…YLGG). The segment covering 55 to 76 (QQQQQQQQQQETSPRQQQQQQQ) has biased composition (low complexity). Ser67 carries the post-translational modification Phosphoserine; by CDK9. A Phosphoserine modification is found at Ser81. The segment covering 123 to 134 (TSATGKGLQQQQ) has biased composition (polar residues). Positions 200-224 (QQQEVVSEGSSSGRAREAAGASTSS) are enriched in low complexity. Tyr228 carries the phosphotyrosine; by CSK modification. The residue at position 261 (Ser261) is a Phosphoserine. Tyr272 bears the Phosphotyrosine; by CSK and TNK2 mark. 4 positions are modified to phosphotyrosine; by CSK: Tyr310, Tyr349, Tyr360, and Tyr365. Tyr366 is modified (phosphotyrosine; by CSK and TNK2). Lys389 participates in a covalent cross-link: Glycyl lysine isopeptide (Lys-Gly) (interchain with G-Cter in SUMO). Tyr396 bears the Phosphotyrosine; by CSK mark. A Glycyl lysine isopeptide (Lys-Gly) (interchain with G-Cter in SUMO) cross-link involves residue Lys508. Phosphotyrosine; by CSK occurs at positions 522 and 539. The tract at residues 539–906 (YYFPPQKTCL…GKVKPIYFHT (368 aa)) is interaction with LPXN. The segment at residues 546-619 (TCLICGDEAS…AGMTLGARKL (74 aa)) is a DNA-binding region (nuclear receptor). NR C4-type zinc fingers lie at residues 547 to 567 (CLIC…CGSC) and 583 to 607 (CASR…LRKC). Residues 559-649 (YGALTCGSCK…TEEPTQKLTV (91 aa)) are interaction with HIPK3. The interval 579-906 (QKYLCASRND…GKVKPIYFHT (328 aa)) is interaction with CCAR1. Residues 612–906 (MTLGARKLKK…GKVKPIYFHT (295 aa)) form an interaction with KAT7 region. Ser638 carries the post-translational modification Phosphoserine; by STK4/MST1. In terms of domain architecture, NR LBD spans 656–887 (ECQPIFLNVL…DFPEMMAEII (232 aa)). 17beta-hydroxy-5alpha-androstan-3-one-binding residues include Asn693 and Arg740. Glycyl lysine isopeptide (Lys-Gly) (interchain with G-Cter in ubiquitin) cross-links involve residues Lys833 and Lys835. Thr865 is a binding site for 17beta-hydroxy-5alpha-androstan-3-one. Phosphotyrosine; by CSK is present on Tyr903.

The protein belongs to the nuclear hormone receptor family. NR3 subfamily. As to quaternary structure, binds DNA as a homodimer. Part of a ternary complex containing AR, EFCAB6/DJBP and PARK7. Interacts with HIPK3 and NR0B2 in the presence of androgen. The ligand binding domain interacts with KAT7/HBO1 in the presence of dihydrotestosterone. Interacts with EFCAB6/DJBP, PQBP1, RANBP9, RBAK, SPDEF, SRA1, TGFB1I1 and RREB1. Interacts with ZMIZ1/ZIMP10 and ZMIZ2/ZMIP7 which both enhance its transactivation activity. Interacts with SLC30A9 and RAD54L2/ARIP4. Interacts with MACROD1 (via macro domain). Interacts via the ligand-binding domain with LXXLL and FXXLF motifs from NCOA1, NCOA2, NCOA3 and MAGEA11. Interacts (via nuclear receptor DNA binding domain and nuclear receptor ligand binding domain) with NCOA4. The AR N-terminal poly-Gln region binds Ran resulting in enhancement of AR-mediated transactivation. Ran-binding decreases as the poly-Gln length increases. Interacts with HIP1 (via coiled coil domain). Interacts (via ligand-binding domain) with TRIM68. Interacts with TNK2. Interacts with USP26. Interacts with RNF6. Interacts (regulated by RNF6 probably through polyubiquitination) with RNF14; regulates AR transcriptional activity. Interacts with PRMT2 and TRIM24. Interacts with RACK1. Interacts with RANBP10; this interaction enhances dihydrotestosterone-induced AR transcriptional activity. Interacts with PRPF6 in a hormone-independent way; this interaction enhances dihydrotestosterone-induced AR transcriptional activity. Interacts with STK4/MST1. Interacts with ZIPK/DAPK3. Interacts with LPXN. Interacts with MAK. Part of a complex containing AR, MAK and NCOA3. Interacts with CRY1. Interacts with CCAR1 and GATA2. Interacts with ZNF318. Interacts with BUD31. Interacts with ARID4A. Interacts with ARID4B. Interacts (via NR LBD domain) with ZBTB7A; the interaction is direct and androgen-dependent. Interacts with NCOR1. Interacts with NCOR2. Interacts witH CRY2 in a ligand-dependent manner. Post-translationally, phosphorylated in prostate cancer cells in response to several growth factors including EGF. Phosphorylation is induced by c-Src kinase (CSK). Tyr-522 is one of the major phosphorylation sites and an increase in phosphorylation and Src kinase activity is associated with prostate cancer progression. Phosphorylation by TNK2 enhances the DNA-binding and transcriptional activity. Phosphorylation at Ser-67 by CDK9 regulates AR promoter selectivity and cell growth. Sumoylated on Lys-389 (major) and Lys-508. Ubiquitinated. Deubiquitinated by USP26. 'Lys-6' and 'Lys-27'-linked polyubiquitination by RNF6 modulates AR transcriptional activity and specificity. In terms of processing, palmitoylated by ZDHHC7 and ZDHHC21. Palmitoylation is required for plasma membrane targeting and for rapid intracellular signaling via ERK and AKT kinases and cAMP generation.

It localises to the nucleus. It is found in the cytoplasm. Functionally, steroid hormone receptors are ligand-activated transcription factors that regulate eukaryotic gene expression and affect cellular proliferation and differentiation in target tissues. Transcription factor activity is modulated by bound coactivator and corepressor proteins like ZBTB7A that recruits NCOR1 and NCOR2 to the androgen response elements/ARE on target genes, negatively regulating androgen receptor signaling and androgen-induced cell proliferation. Transcription activation is also down-regulated by NR0B2. Activated, but not phosphorylated, by HIPK3 and ZIPK/DAPK3. In Canis lupus familiaris (Dog), this protein is Androgen receptor (AR).